The chain runs to 134 residues: Transmembrane protein 100 (134 aa).

Residues Met-1–Lys-23 are disordered. Ser-15 bears the Phosphoserine mark. 2 consecutive transmembrane segments (helical) span residues Cys-56 to Tyr-76 and Ile-84 to Ala-104. Residue Ser-121 is modified to Phosphoserine.

In terms of assembly, interacts (via C-terminus) with TRPA1 and TRPV1. Interacts with TASOR. Expressed in dorsal root ganglia. Expressed in neurons as well as nerve fiber bundles connecting ganglia and fibers innervating muscle layer of the gastric body, jejunum, and proximal colon. Expressed in arterial endothelial cells and neurons of the central nervous system and peripheral nervous system (at protein level). Expressed strongly in lung, weakly in brain, heart and muscle. Expressed in enteric neurons and vascular tissue in the muscularis propria of the gastrointestinal tract.

It localises to the cell membrane. The protein resides in the membrane. The protein localises to the perikaryon. Its subcellular location is the cytoplasm. It is found in the perinuclear region. It localises to the endoplasmic reticulum. In terms of biological role, plays a role during embryonic arterial endothelium differentiation and vascular morphogenesis through the ACVRL1 receptor-dependent signaling pathway upon stimulation by bone morphogenetic proteins, such as GDF2/BMP9 and BMP10. Involved in the regulation of nociception, acting as a modulator of the interaction between TRPA1 and TRPV1, two molecular sensors and mediators of pain signals in dorsal root ganglia (DRG) neurons. Mechanistically, it weakens their interaction, thereby releasing the inhibition of TRPA1 by TRPV1 and increasing the single-channel open probability of the TRPA1-TRPV1 complex. The polypeptide is Transmembrane protein 100 (Tmem100) (Mus musculus (Mouse)).